A 315-amino-acid polypeptide reads, in one-letter code: Cysteine synthase (315 aa).

Residues N8 and R35 each contribute to the hydrogen sulfide site. Position 42 is an N6-(pyridoxal phosphate)lysine (K42). Pyridoxal 5'-phosphate contacts are provided by residues N72 and G177–T181. L269 is a binding site for hydrogen sulfide. Residue S273 coordinates pyridoxal 5'-phosphate.

The protein belongs to the cysteine synthase/cystathionine beta-synthase family. In terms of assembly, homodimer. Pyridoxal 5'-phosphate serves as cofactor.

It carries out the reaction O-acetyl-L-serine + hydrogen sulfide = L-cysteine + acetate. It participates in amino-acid biosynthesis; L-cysteine biosynthesis; L-cysteine from L-serine: step 2/2. This is Cysteine synthase (cysK) from Buchnera aphidicola subsp. Acyrthosiphon pisum (strain APS) (Acyrthosiphon pisum symbiotic bacterium).